A 389-amino-acid polypeptide reads, in one-letter code: tRNA-specific 2-thiouridylase MnmA (389 aa).

Residues 35 to 42 (GMSGGVDS) and methionine 61 each bind ATP. The interval 121-123 (NPD) is interaction with target base in tRNA. Cysteine 126 serves as the catalytic Nucleophile. Cysteine 126 and cysteine 223 are oxidised to a cystine. Glycine 151 lines the ATP pocket. The interval 173 to 175 (KDQ) is interaction with tRNA. The active-site Cysteine persulfide intermediate is the cysteine 223. The tract at residues 335 to 336 (RY) is interaction with tRNA.

The protein belongs to the MnmA/TRMU family.

It is found in the cytoplasm. The enzyme catalyses S-sulfanyl-L-cysteinyl-[protein] + uridine(34) in tRNA + AH2 + ATP = 2-thiouridine(34) in tRNA + L-cysteinyl-[protein] + A + AMP + diphosphate + H(+). In terms of biological role, catalyzes the 2-thiolation of uridine at the wobble position (U34) of tRNA, leading to the formation of s(2)U34. This chain is tRNA-specific 2-thiouridylase MnmA, found in Actinobacillus pleuropneumoniae serotype 3 (strain JL03).